The sequence spans 92 residues: MTRSLKKGPFVDHHLLAKVEKAVATKDKKPVKTWSRRSMVLPEFIGLTIAVHNGKQHVPVYITDQMVGHKLGEFALTRTFKGHPADKKVQKK.

The protein belongs to the universal ribosomal protein uS19 family.

In terms of biological role, protein S19 forms a complex with S13 that binds strongly to the 16S ribosomal RNA. In Paracidovorax citrulli (strain AAC00-1) (Acidovorax citrulli), this protein is Small ribosomal subunit protein uS19.